An 865-amino-acid polypeptide reads, in one-letter code: Ribosome biogenesis protein BOP1 homolog (865 aa).

Disordered regions lie at residues 1-195 and 207-240; these read MVAN…LKLG and KTRGLGVFPPVPKRKGKAAQDEYAAGDTSDEEDI. 3 stretches are compositionally biased toward acidic residues: residues 30 to 44, 57 to 79, and 87 to 159; these read LDESNDEDNSNESDY, NEGEDSSDSDGEYATDDDEDDVL, and DGEE…EEEA. The span at 160–180 shows a compositional bias: basic and acidic residues; it reads KENGKEKPAKAKAERKQREEQ. WD repeat units follow at residues 526-565, 567-607, 651-693, 696-734, 737-776, 780-819, and 835-865; these read GHTSLIRCISVEPKGEYIVTGSDDMTVKIWEISTARCIRT, PTGD…YMLV, THFR…SQVP, KSKGLIQCVLFHPIKPCLFVATQRHIRVYDLVKQLMMKK, PGCKWISSMAIHPKGDNLLIGTYEKRLMWFDLDLSTKPYQ, IHNAAIRSVAFHPRYPLFASAGDDRSVIVSHGMVYNDLLQ, and VNDFSVFDVVFHPTQPWVFSSGADNTVRLYT.

Belongs to the WD repeat BOP1/ERB1 family.

The protein localises to the nucleus. It localises to the nucleolus. It is found in the nucleoplasm. Required for maturation of ribosomal RNAs and formation of the large ribosomal subunit. This is Ribosome biogenesis protein BOP1 homolog from Anopheles gambiae (African malaria mosquito).